The sequence spans 290 residues: Outer dense fiber protein 4 (290 aa).

Serine 28 is subject to Phosphoserine. 4 helical membrane passes run 44–64 (AQVV…VMVF), 125–145 (PVFG…FVLT), 164–184 (LIGI…LLLF), and 201–221 (IGWS…CGIL). The segment at 247–290 (GPESLVSPSQTPSSQENSQESPKDDQKPSSPDKVVSPPQPDTTG) is disordered. The span at 252–266 (VSPSQTPSSQENSQE) shows a compositional bias: polar residues.

In terms of tissue distribution, expressed in testis.

The protein resides in the membrane. In terms of biological role, component of the outer dense fibers (ODF) of spermatozoa which could be involved in sperm tail structure, sperm movement and general organization of cellular cytoskeleton. The protein is Outer dense fiber protein 4 (Odf4) of Mus musculus (Mouse).